A 427-amino-acid polypeptide reads, in one-letter code: Glutamyl-tRNA reductase (427 aa).

Substrate-binding positions include 49 to 52, serine 101, 106 to 108, and glutamine 112; these read TCNR and EPQ. Cysteine 50 acts as the Nucleophile in catalysis. 181–186 contacts NADP(+); that stretch reads GAGETI. The tract at residues 407–427 is disordered; the sequence is FPATPGYRHPPVRPDDADPAP. The span at 418–427 shows a compositional bias: basic and acidic residues; sequence VRPDDADPAP.

The protein belongs to the glutamyl-tRNA reductase family. As to quaternary structure, homodimer.

It carries out the reaction (S)-4-amino-5-oxopentanoate + tRNA(Glu) + NADP(+) = L-glutamyl-tRNA(Glu) + NADPH + H(+). It participates in porphyrin-containing compound metabolism; protoporphyrin-IX biosynthesis; 5-aminolevulinate from L-glutamyl-tRNA(Glu): step 1/2. Catalyzes the NADPH-dependent reduction of glutamyl-tRNA(Glu) to glutamate 1-semialdehyde (GSA). The protein is Glutamyl-tRNA reductase of Stenotrophomonas maltophilia (strain R551-3).